The sequence spans 321 residues: Acetylglutamate kinase (321 aa).

Residues 88–89 (GG), R110, and N216 contribute to the substrate site.

This sequence belongs to the acetylglutamate kinase family. ArgB subfamily.

Its subcellular location is the cytoplasm. The catalysed reaction is N-acetyl-L-glutamate + ATP = N-acetyl-L-glutamyl 5-phosphate + ADP. The protein operates within amino-acid biosynthesis; L-arginine biosynthesis; N(2)-acetyl-L-ornithine from L-glutamate: step 2/4. Its function is as follows. Catalyzes the ATP-dependent phosphorylation of N-acetyl-L-glutamate. The protein is Acetylglutamate kinase of Ehrlichia chaffeensis (strain ATCC CRL-10679 / Arkansas).